The chain runs to 338 residues: 1-aminocyclopropane-1-carboxylate deaminase (338 aa).

Residue lysine 51 is modified to N6-(pyridoxal phosphate)lysine. Serine 78 acts as the Nucleophile in catalysis.

It belongs to the ACC deaminase/D-cysteine desulfhydrase family. Pyridoxal 5'-phosphate is required as a cofactor.

The catalysed reaction is 1-aminocyclopropane-1-carboxylate + H2O = 2-oxobutanoate + NH4(+). In terms of biological role, catalyzes a cyclopropane ring-opening reaction, the irreversible conversion of 1-aminocyclopropane-1-carboxylate (ACC) to ammonia and alpha-ketobutyrate. Allows growth on ACC as a nitrogen source. This Enterobacter cloacae protein is 1-aminocyclopropane-1-carboxylate deaminase.